We begin with the raw amino-acid sequence, 931 residues long: Netrin receptor UNC5C (931 aa).

The signal sequence occupies residues 1–40 (MRKGLRATAARCGLGLGYLLQMLVLPALALLSASGTGSAA). The Extracellular portion of the chain corresponds to 41–380 (QDDDFFHELP…APDSDDVALY (340 aa)). An Ig-like domain is found at 62–159 (PHFLIEPEEA…AGTTKSRKAY (98 aa)). 9 disulfides stabilise this stretch: cysteine 83-cysteine 144, cysteine 95-cysteine 142, cysteine 188-cysteine 239, cysteine 272-cysteine 309, cysteine 276-cysteine 313, cysteine 287-cysteine 299, cysteine 328-cysteine 362, cysteine 332-cysteine 367, and cysteine 340-cysteine 352. An Ig-like C2-type domain is found at 161–256 (RIAYLRKTFE…KRKSTTATVI (96 aa)). N-linked (GlcNAc...) asparagine glycosylation occurs at asparagine 236. 2 TSP type-1 domains span residues 260 to 314 (NGGW…TLCP) and 316 to 368 (DGRW…GLCM). An N-linked (GlcNAc...) asparagine glycan is attached at asparagine 361. The chain crosses the membrane as a helical span at residues 381–401 (VGIVIAVTVCLAITVVVALFV). Topologically, residues 402-931 (YRKNHRDFES…VVSLAAEGQY (530 aa)) are cytoplasmic. Residues 402 to 931 (YRKNHRDFES…VVSLAAEGQY (530 aa)) are required for netrin-mediated axon repulsion of neuronal growth cones. Serine 502 carries the phosphoserine modification. A ZU5 domain is found at 530-673 (CTAFGTFNSL…LSTYALVGQS (144 aa)). Tyrosine 568 bears the Phosphotyrosine mark. The interval 694–712 (SLEYSIRVYCLDDTQDALK) is interaction with DCC. The region spanning 850-929 (QKLCSSLDAP…ETVVSLAAEG (80 aa)) is the Death domain.

It belongs to the unc-5 family. As to quaternary structure, interacts with DCC (via cytoplasmic domain). Interacts (tyrosine phosphorylated form) with PTPN11. Interacts (via extracellular domain) with FLRT3 (via extracellular domain). Interacts (via Ig-like C2-type domain) with DSCAM (via extracellular domain). Interacts (via death domain) with DAPK1. Interacts (via cytoplasmic domain) with TUBB3; this interaction is decreased by NTN1/Netrin-1. In terms of processing, proteolytically cleaved by caspases during apoptosis. The cleavage does not take place when the receptor is associated with netrin ligand. Its cleavage by caspases is required to induce apoptosis. Phosphorylated on different cytoplasmic tyrosine residues. Phosphorylation of Tyr-568 leads to an interaction with PTPN11 phosphatase, suggesting that its activity is regulated by phosphorylation/dephosphorylation. Tyrosine phosphorylation is netrin-dependent. Detected in brain (at protein level). Mainly expressed in brain. Also expressed in kidney. Not expressed in developing or adult lung.

Its subcellular location is the cell membrane. It localises to the cell surface. The protein resides in the synapse. The protein localises to the synaptosome. It is found in the cell projection. Its subcellular location is the axon. It localises to the dendrite. The protein resides in the growth cone. The protein localises to the lamellipodium. It is found in the filopodium. Receptor for netrin required for axon guidance. Mediates axon repulsion of neuronal growth cones in the developing nervous system upon ligand binding. NTN1/Netrin-1 binding might cause dissociation of UNC5C from polymerized TUBB3 in microtubules and thereby lead to increased microtubule dynamics and axon repulsion. Axon repulsion in growth cones may also be caused by its association with DCC that may trigger signaling for repulsion. Might also collaborate with DSCAM in NTN1-mediated axon repulsion independently of DCC. Also involved in corticospinal tract axon guidance independently of DCC. Involved in dorsal root ganglion axon projection towards the spinal cord. It also acts as a dependence receptor required for apoptosis induction when not associated with netrin ligand. This is Netrin receptor UNC5C (Unc5c) from Rattus norvegicus (Rat).